Here is a 231-residue protein sequence, read N- to C-terminus: Phosphoglycolate phosphatase (231 aa).

Residue Asp9 is the Nucleophile of the active site. Asp9 and Asp11 together coordinate Mg(2+). The active-site Proton donor is the Asp11. Position 154 (Lys154) interacts with substrate. The Mg(2+) site is built by Asp177 and Asp181.

It belongs to the archaeal SPP-like hydrolase family. As to quaternary structure, homodimer. Mg(2+) is required as a cofactor.

It carries out the reaction 2-phosphoglycolate + H2O = glycolate + phosphate. Functionally, catalyzes the dephosphorylation of 2-phosphoglycolate. Has phosphatase activity towards p-nitrophenylphosphate (in vitro). The polypeptide is Phosphoglycolate phosphatase (Pyrococcus horikoshii (strain ATCC 700860 / DSM 12428 / JCM 9974 / NBRC 100139 / OT-3)).